The following is a 53-amino-acid chain: Light-harvesting protein B-800/820 alpha chain (53 aa).

Topologically, residues 1–14 (MNQGKIWTVVNPAV) are cytoplasmic. A helical transmembrane segment spans residues 15–35 (GLPLLLGSVAITALLVHLAVL). An a bacteriochlorophyll-binding site is contributed by H31. The Periplasmic portion of the chain corresponds to 36–53 (THTTWFPAFTQGGLKKAA).

This sequence belongs to the antenna complex alpha subunit family. In terms of assembly, the core complex is formed by different alpha and beta chains, binding bacteriochlorophyll molecules, and arranged most probably in tetrameric structures disposed around the reaction center. The non-pigmented gamma chains may constitute additional components.

The protein localises to the cell inner membrane. Antenna complexes are light-harvesting systems, which transfer the excitation energy to the reaction centers. In Rhodoblastus acidophilus (Rhodopseudomonas acidophila), this protein is Light-harvesting protein B-800/820 alpha chain.